The following is a 213-amino-acid chain: Nickel-cobalt-cadmium resistance protein NccN (213 aa).

4 consecutive transmembrane segments (helical) span residues 24–44, 48–68, 113–133, and 180–200; these read IGIW…GHSQ, TWIS…ATVG, ESIT…PAVI, and NLAD…VELA.

The protein to A.eutrophus CzcN.

The protein localises to the cell inner membrane. Functionally, component of the NCC cation-efflux system that confers resistance to nickel, cobalt and cadmium. Appears to be involved in metal specificity but affects only nickel resistance. May be involved in nickel transport. This is Nickel-cobalt-cadmium resistance protein NccN (nccN) from Alcaligenes xylosoxydans xylosoxydans (Achromobacter xylosoxidans).